The following is a 245-amino-acid chain: Type II restriction enzyme EcoRV (245 aa).

Residues glutamate 45, aspartate 74, and aspartate 90 each coordinate Mg(2+). Active-site residues include aspartate 74, aspartate 90, and lysine 92.

In terms of assembly, homodimer. Mg(2+) is required as a cofactor.

It catalyses the reaction Endonucleolytic cleavage of DNA to give specific double-stranded fragments with terminal 5'-phosphates.. A P subtype restriction enzyme that recognizes the double-stranded sequence 5'-GATATC-3' and cleaves after T-3. This Escherichia coli protein is Type II restriction enzyme EcoRV (ecoRVR).